The following is a 208-amino-acid chain: Outer-membrane lipoprotein carrier protein (208 aa).

Positions 1-21 (MKKLNTLLLVLGSLVATPSFA) are cleaved as a signal peptide. The interval 188–208 (KSTFEFTPPEGVEIDDQSNGE) is disordered. Residues 199 to 208 (VEIDDQSNGE) are compositionally biased toward acidic residues.

It belongs to the LolA family. Monomer.

The protein localises to the periplasm. Its function is as follows. Participates in the translocation of lipoproteins from the inner membrane to the outer membrane. Only forms a complex with a lipoprotein if the residue after the N-terminal Cys is not an aspartate (The Asp acts as a targeting signal to indicate that the lipoprotein should stay in the inner membrane). This is Outer-membrane lipoprotein carrier protein from Pseudoalteromonas translucida (strain TAC 125).